A 1162-amino-acid polypeptide reads, in one-letter code: Topoisomerase 1-associated factor 1 (1162 aa).

2 disordered regions span residues 977 to 1017 and 1127 to 1162; these read TEGR…EANA and TQVV…DTEY. Over residues 993–1003 the composition is skewed to basic residues; sequence QRSKGKRKAIA.

It belongs to the timeless family. In terms of assembly, component of the fork protection complex (FPC) consisting of TOF1 and CSM3.

It is found in the nucleus. Its function is as follows. Forms a fork protection complex (FPC) with CSM3 and which is required for chromosome segregation during meiosis and DNA damage repair. FPC coordinates leading and lagging strand synthesis and moves with the replication fork. FPC stabilizes replication forks in a configuration that is recognized by replication checkpoint sensors. The sequence is that of Topoisomerase 1-associated factor 1 (TOF1) from Kluyveromyces lactis (strain ATCC 8585 / CBS 2359 / DSM 70799 / NBRC 1267 / NRRL Y-1140 / WM37) (Yeast).